The sequence spans 550 residues: Arginine--tRNA ligase (550 aa).

The short motif at 130 to 140 (ANPTGPIHIGG) is the 'HIGH' region element.

This sequence belongs to the class-I aminoacyl-tRNA synthetase family. In terms of assembly, monomer.

It localises to the cytoplasm. It carries out the reaction tRNA(Arg) + L-arginine + ATP = L-arginyl-tRNA(Arg) + AMP + diphosphate. This Mycolicibacterium paratuberculosis (strain ATCC BAA-968 / K-10) (Mycobacterium paratuberculosis) protein is Arginine--tRNA ligase.